A 361-amino-acid chain; its full sequence is 3-dehydroquinate synthase (361 aa).

Residues 72 to 77 (SGEKEK), 130 to 131 (TT), Lys-142, and Lys-151 contribute to the NAD(+) site. 3 residues coordinate Zn(2+): Glu-184, His-247, and His-264.

This sequence belongs to the sugar phosphate cyclases superfamily. Dehydroquinate synthase family. The cofactor is Co(2+). Zn(2+) is required as a cofactor. Requires NAD(+) as cofactor.

Its subcellular location is the cytoplasm. It catalyses the reaction 7-phospho-2-dehydro-3-deoxy-D-arabino-heptonate = 3-dehydroquinate + phosphate. The protein operates within metabolic intermediate biosynthesis; chorismate biosynthesis; chorismate from D-erythrose 4-phosphate and phosphoenolpyruvate: step 2/7. Its function is as follows. Catalyzes the conversion of 3-deoxy-D-arabino-heptulosonate 7-phosphate (DAHP) to dehydroquinate (DHQ). In Bacillus mycoides (strain KBAB4) (Bacillus weihenstephanensis), this protein is 3-dehydroquinate synthase.